Reading from the N-terminus, the 139-residue chain is Small integral membrane protein 34 (139 aa).

A helical membrane pass occupies residues 46–66 (GTSAAWYILTIIGIYAVIFVF).

The protein localises to the membrane. The chain is Small integral membrane protein 34 from Homo sapiens (Human).